The primary structure comprises 389 residues: Migration and invasion-inhibitory protein (389 aa).

Over residues 44–54 the composition is skewed to low complexity; the sequence is LDYSSSSNNLE. Disordered stretches follow at residues 44 to 80 and 131 to 150; these read LDYSSSSNNLEMPLSQETSASSVAPNSQDKRHVWDPL and KRPVSLGGPKGLGPDKAQVP. Residues 58–70 show a composition bias toward polar residues; that stretch reads SQETSASSVAPNS. Residues 71 to 80 show a composition bias toward basic and acidic residues; the sequence is QDKRHVWDPL. Ser309 is subject to Phosphoserine.

As to quaternary structure, interacts with IGFBP2.

Inhibits glioma cells invasion and down-regulates adhesion- and motility-associated genes such as NFKB2 and ICAM1. Exhibits opposing effects to IGFBP2 on cell invasion. The polypeptide is Migration and invasion-inhibitory protein (Miip) (Rattus norvegicus (Rat)).